We begin with the raw amino-acid sequence, 659 residues long: ATP-binding cassette sub-family D member 3 (659 aa).

The interval 1–61 is interaction with PEX19; sequence MAAFSKYLTA…GKKERAVVDK (61 aa). N12 carries an N-linked (GlcNAc...) asparagine glycan. K61 is subject to N6-acetyllysine. A helical membrane pass occupies residues 84–104; that stretch reads GYLLLIAVMLVSRTYCDVWMI. The ABC transmembrane type-1 domain maps to 85–372; sequence YLLLIAVMLV…MLLRMSQALG (288 aa). N-linked (GlcNAc...) asparagine glycosylation occurs at N106. Residues 126–146 traverse the membrane as a helical segment; it reads LFNFIAAMPLISLVNNFLKYG. A glycan (N-linked (GlcNAc...) asparagine) is linked at N206. A helical membrane pass occupies residues 224 to 244; the sequence is AIGAQGPASMMAYLLVSGLFL. K260 bears the N6-acetyllysine mark. A helical membrane pass occupies residues 313-333; it reads MGFIDSIIAKYVATVVGYLVV. The residue at position 399 (K399) is an N6-acetyllysine. S424 is subject to Phosphoserine. Residues 434 to 659 enclose the ABC transporter domain; that stretch reads INTDNIIKFD…ITEDTVEFGS (226 aa). 473-480 provides a ligand contact to ATP; sequence GPNGCGKS. Residue K533 is modified to N6-acetyllysine. Phosphoserine is present on S659.

Belongs to the ABC transporter superfamily. ABCD family. Peroxisomal fatty acyl CoA transporter (TC 3.A.1.203) subfamily. In terms of assembly, homodimers. Can form heterodimers with ABCD1 and ABCD2. Dimerization is necessary to form an active transporter. Interacts with PEX19; mediates the targeting of ABCD3 to peroxisomes. In terms of processing, ubiquitinated by PEX2 during pexophagy in response to starvation, leading to its degradation.

Its subcellular location is the peroxisome membrane. It carries out the reaction a very long-chain fatty acyl-CoA + H2O = a very long-chain fatty acid + CoA + H(+). The catalysed reaction is a very long-chain fatty acid(in) + ATP + H2O = a very long-chain fatty acid(out) + ADP + phosphate + H(+). The enzyme catalyses a long-chain fatty acyl-CoA + H2O = a long-chain fatty acid + CoA + H(+). It catalyses the reaction a long-chain fatty acid(in) + ATP + H2O = a long-chain fatty acid(out) + ADP + phosphate + H(+). It carries out the reaction pristanoyl-CoA + H2O = 2,6,10,14-tetramethylpentadecanoate + CoA + H(+). The catalysed reaction is 2,6,10,14-tetramethylpentadecanoate(in) + ATP + H2O = 2,6,10,14-tetramethylpentadecanoate(out) + ADP + phosphate + H(+). The enzyme catalyses hexadecanedioyl-CoA + H2O = hexadecanedioate + CoA + H(+). It catalyses the reaction hexadecanedioate(in) + ATP + H2O = hexadecanedioate(out) + ADP + phosphate + H(+). It carries out the reaction (5Z,8Z,11Z,14Z,17Z)-eicosapentaenoyl-CoA + H2O = (5Z,8Z,11Z,14Z,17Z)-eicosapentaenoate + CoA + H(+). The catalysed reaction is (5Z,8Z,11Z,14Z,17Z)-eicosapentaenoate(in) + ATP + H2O = (5Z,8Z,11Z,14Z,17Z)-eicosapentaenoate(out) + ADP + phosphate + H(+). The enzyme catalyses (4Z,7Z,10Z,13Z,16Z,19Z)-docosahexaenoyl-CoA + H2O = (4Z,7Z,10Z,13Z,16Z,19Z)-docosahexaenoate + CoA + H(+). It catalyses the reaction (4Z,7Z,10Z,13Z,16Z,19Z)-docosahexaenoate(in) + ATP + H2O = (4Z,7Z,10Z,13Z,16Z,19Z)-docosahexaenoate(out) + ADP + phosphate + H(+). Broad substrate specificity ATP-dependent transporter of the ATP-binding cassette (ABC) family that catalyzes the transport of long-chain fatty acids (LCFA)-CoA, dicarboxylic acids-CoA, long-branched-chain fatty acids-CoA and bile acids from the cytosol to the peroxisome lumen for beta-oxydation. Has fatty acyl-CoA thioesterase and ATPase activities. Probably hydrolyzes fatty acyl-CoAs into free fatty acids prior to their ATP-dependent transport into peroxisomes. Thus, play a role in regulation of LCFAs and energy metabolism namely, in the degradation and biosynthesis of fatty acids by beta-oxidation. This chain is ATP-binding cassette sub-family D member 3 (Abcd3), found in Mus musculus (Mouse).